Here is a 326-residue protein sequence, read N- to C-terminus: Structural protein ORF326a (326 aa).

The tract at residues 1 to 28 is disordered; sequence MSTTFRGKKEEEEEEEEEKEEKEEELFN. Over residues 11 to 26 the composition is skewed to acidic residues; the sequence is EEEEEEEEKEEKEEEL.

The protein localises to the virion. This Acidianus two-tailed virus (ATV) protein is Structural protein ORF326a.